A 260-amino-acid chain; its full sequence is MFLFSRKTKTPISTYSDSYRAPTSIKEVYKDPPLWAWEANKFVTPGLTQTMHRHVDPEALQKMTKCAAQDYTYKSSISGHPYLPEKYWLSPDEEDKCCPSYLDNDRYNTWKTSPCSNYWNKYTGCLPRLSKDTGMESVRGMPLEYPPKQERLNAYEREVVVNMLNSLSRNRTLPQIVPRCGCVDPLPGRLPYQGYESPCSGRHYCLRGMDYCTTREPSTERRLRPLCSQQPTECVALRSPARNAMCCYNSPAIILPVSQP.

Belongs to the SPMIP6 family. Microtubule inner protein component of sperm flagellar doublet microtubules. Interacts with alpha-tubulin. Testis-specific, expressed exclusively in germ cells (at protein level). In terms of tissue distribution, testis-specific. As to expression, expressed in both lung and testis.

Its subcellular location is the cytoplasm. It localises to the cytoskeleton. The protein localises to the nucleus. The protein resides in the mitochondrion. It is found in the flagellum axoneme. Functionally, may participate in intramanchette transport and midpiece formation of the sperm tail. May play a potential role in somatic cell proliferation. The polypeptide is Sperm microtubule inner protein 6 (SPMIP6) (Mus musculus (Mouse)).